A 167-amino-acid polypeptide reads, in one-letter code: HTH-type transcriptional repressor YetL (167 aa).

The region spanning Ser-26–Glu-160 is the HTH marR-type domain. Positions Pro-74–Arg-97 form a DNA-binding region, H-T-H motif.

As to quaternary structure, homodimer. The N- and C-terminal helices from both subunits stabilize YetL dimer via extensive intersubunit interactions.

Binding to the yetM cis sequence is clearly inhibited by kaempferol, morin, apigenin and luteolin, slightly inhibited by quercetin and galangin, but no inhibition is observed with the other flavonoids. Flavonoid binding may induce conformational changes and modulate interaction with DNA. Functionally, negatively regulates yetM expression and its own expression. Binds specifically to corresponding single sites in the divergent yetL and yetM promoter regions, with higher affinity to the yetM region. Recognizes a 28-mer operator of double-stranded DNA that contains a palindromic sequence. The polypeptide is HTH-type transcriptional repressor YetL (yetL) (Bacillus subtilis (strain 168)).